Consider the following 315-residue polypeptide: Putative S-adenosyl-L-methionine-dependent methyltransferase MAV_4557 (315 aa).

S-adenosyl-L-methionine contacts are provided by residues D134 and 163–164 (DL).

This sequence belongs to the UPF0677 family.

Exhibits S-adenosyl-L-methionine-dependent methyltransferase activity. This is Putative S-adenosyl-L-methionine-dependent methyltransferase MAV_4557 from Mycobacterium avium (strain 104).